Here is a 1151-residue protein sequence, read N- to C-terminus: Zinc finger protein ZFPM2 (1151 aa).

Residues methionine 1–lysine 13 are compositionally biased toward basic residues. Positions methionine 1–glutamate 102 are disordered. Acidic residues-rich tracts occupy residues aspartate 18–aspartate 33 and glutamate 70–threonine 82. Residues isoleucine 244–glutamine 277 form a CCHC FOG-type 1 zinc finger. Positions 252, 255, 268, and 273 each coordinate Zn(2+). The C2H2-type 1 zinc finger occupies serine 296 to histidine 320. Residue lysine 324 forms a Glycyl lysine isopeptide (Lys-Gly) (interchain with G-Cter in SUMO1) linkage. 2 C2H2-type zinc fingers span residues leucine 335–histidine 357 and phenylalanine 363–histidine 385. The interval glycine 389 to asparagine 487 is disordered. Polar residues-rich tracts occupy residues proline 401–proline 410 and glutamate 419–aspartate 431. Residue lysine 444 forms a Glycyl lysine isopeptide (Lys-Gly) (interchain with G-Cter in SUMO2) linkage. A compositionally biased stretch (polar residues) spans leucine 447–glutamine 485. Lysine 471 is covalently cross-linked (Glycyl lysine isopeptide (Lys-Gly) (interchain with G-Cter in SUMO1)). Residue serine 532 is modified to Phosphoserine. The segment at proline 542–tryptophan 575 adopts a CCHC FOG-type 2 zinc-finger fold. Residues cysteine 550, cysteine 553, histidine 566, and cysteine 571 each coordinate Zn(2+). Serine 581 is subject to Phosphoserine. The tract at residues glycine 636 to aspartate 683 is disordered. Polar residues predominate over residues serine 647–asparagine 658. The CCHC FOG-type 3 zinc finger occupies glutamate 681 to histidine 714. Residues cysteine 689, cysteine 692, histidine 705, and cysteine 710 each coordinate Zn(2+). The Nuclear localization signal motif lies at arginine 736–lysine 740. The tract at residues proline 829–lysine 835 is interaction with CTBP2. The CCHC FOG-type 4 zinc finger occupies lysine 848–alanine 881. Zn(2+) is bound by residues cysteine 856, cysteine 859, histidine 872, and cysteine 877. Phosphoserine is present on serine 904. Glycyl lysine isopeptide (Lys-Gly) (interchain with G-Cter in SUMO1) cross-links involve residues lysine 915 and lysine 955. Residue serine 1014 is modified to Phosphoserine. The interval aspartate 1051–proline 1095 is disordered. Polar residues predominate over residues asparagine 1057–proline 1067. The CCHC FOG-type 5 zinc-finger motif lies at glutamine 1113 to alanine 1146. Zn(2+) contacts are provided by cysteine 1121, cysteine 1124, histidine 1137, and cysteine 1142.

The protein belongs to the FOG (Friend of GATA) family. In terms of assembly, interacts with the N-terminal zinc-finger of GATA4, GATA5 and probably GATA6. Interacts with retinoid nuclear receptor RXRA when ligand bound. Interacts with corepressor CTBP2; this interaction is however not essential for corepressor activity. Able to bind GATA1 in vitro. Interacts with NR2F2 and NR2F6. Interacts with ATOH8; mediates indirect interaction with GATA4. In terms of processing, sumoylation reduces transcriptional repression activity. Widely expressed at low level.

The protein resides in the nucleus. Transcription regulator that plays a central role in heart morphogenesis and development of coronary vessels from epicardium, by regulating genes that are essential during cardiogenesis. Essential cofactor that acts via the formation of a heterodimer with transcription factors of the GATA family GATA4, GATA5 and GATA6. Such heterodimer can both activate or repress transcriptional activity, depending on the cell and promoter context. Also required in gonadal differentiation, possibly be regulating expression of SRY. Probably acts a corepressor of NR2F2. The protein is Zinc finger protein ZFPM2 (ZFPM2) of Homo sapiens (Human).